Here is a 210-residue protein sequence, read N- to C-terminus: Uracil phosphoribosyltransferase (210 aa).

5-phospho-alpha-D-ribose 1-diphosphate is bound by residues Arg78, Arg103, and 130-138 (DPMLATGGT). Residues Ile193 and 198-200 (GDA) each bind uracil. Asp199 provides a ligand contact to 5-phospho-alpha-D-ribose 1-diphosphate.

Belongs to the UPRTase family. Requires Mg(2+) as cofactor.

The catalysed reaction is UMP + diphosphate = 5-phospho-alpha-D-ribose 1-diphosphate + uracil. It participates in pyrimidine metabolism; UMP biosynthesis via salvage pathway; UMP from uracil: step 1/1. With respect to regulation, allosterically activated by GTP. In terms of biological role, catalyzes the conversion of uracil and 5-phospho-alpha-D-ribose 1-diphosphate (PRPP) to UMP and diphosphate. In Xanthomonas euvesicatoria pv. vesicatoria (strain 85-10) (Xanthomonas campestris pv. vesicatoria), this protein is Uracil phosphoribosyltransferase.